The chain runs to 492 residues: N-succinylglutamate 5-semialdehyde dehydrogenase (492 aa).

Gly-220–Gly-225 is an NAD(+) binding site. Residues Glu-243 and Cys-277 contribute to the active site.

It belongs to the aldehyde dehydrogenase family. AstD subfamily.

The catalysed reaction is N-succinyl-L-glutamate 5-semialdehyde + NAD(+) + H2O = N-succinyl-L-glutamate + NADH + 2 H(+). The protein operates within amino-acid degradation; L-arginine degradation via AST pathway; L-glutamate and succinate from L-arginine: step 4/5. Catalyzes the NAD-dependent reduction of succinylglutamate semialdehyde into succinylglutamate. This chain is N-succinylglutamate 5-semialdehyde dehydrogenase, found in Salmonella agona (strain SL483).